Reading from the N-terminus, the 461-residue chain is BSD domain-containing protein 1 (461 aa).

2 positions are modified to phosphoserine: S123 and S197. The BSD domain maps to 177–229; the sequence is WLSQFCLEEKKGEISELLVGSPSIRALYTKMVPAAVSHSEFWHRYFYKVHQLE. Residues 239–384 are disordered; sequence KQRAEQSISE…SGPEPRPPAR (146 aa). Over residues 250–259 the composition is skewed to acidic residues; the sequence is PGWEEEEEEL. Over residues 295–318 the composition is skewed to low complexity; that stretch reads LVTPVEPPTEVTPSESSESVSLVT. T387 is subject to Phosphothreonine. A disordered region spans residues 398-430; that stretch reads VFELNSDSGKSTPSNNGKKGSSTDISEDWEKDF. A compositionally biased stretch (polar residues) spans 402-421; the sequence is NSDSGKSTPSNNGKKGSSTD. Residues S418, S419, and S449 each carry the phosphoserine modification.

The polypeptide is BSD domain-containing protein 1 (BSDC1) (Bos taurus (Bovine)).